The sequence spans 466 residues: MATEGDKLLGGRFVGSVDPIMEILSSSISTEQRLTEVDIQASMAYAKALEKASILTKTELEKILSGLEKISEESSKGVLVMTQSDEDIQTAIERRLKELIGDIAGKLQTGRSRNEQVVTDLKLLLKSSISVISTHLLQLIKTLVERAAIEIDIIMPGYTHLQKALPIRWSQFLLSHAVALTRDSERLGEVKKRITVLPLGSGVLAGNPLEIDRELLRSELDMTSITLNSIDAISERDFVVELISVATLLMIHLSKLAEDLIIFSTTEFGFVTLSDAYSTGSSLLPQKKNPDSLELIRSKAGRVFGRLAAILMVLKGIPSTFSKDLQEDKEAVLDVVDTLTAVLQVATGVISTLQINKENMEKALTPELLSTDLALYLVRKGMPIRQAQTASGKAVHLAETKGITINNLTLEDLKSISPLFASDVSQVFSVVNSVEQYTAVGGTAKSSVTAQIEQLRELLKKQKEQA.

It belongs to the lyase 1 family. Argininosuccinate lyase subfamily. In terms of assembly, homotetramer. Eye lens.

Its function is as follows. Delta crystallin, the principal crystallin in embryonic lens, is found only in birds and reptiles. This chain is Delta-1 crystallin (ASL1), found in Meleagris gallopavo (Wild turkey).